The following is a 488-amino-acid chain: Secreted triacylglycerol lipase LIP1 (488 aa).

An N-terminal signal peptide occupies residues 1–26; the sequence is MPSMLSLFYLAQSLFLLLLFPLYGHA. Cys-119 and Cys-288 form a disulfide bridge. Residue Asn-183 is glycosylated (N-linked (GlcNAc...) asparagine). The Nucleophile role is filled by Ser-201. N-linked (GlcNAc...) asparagine glycosylation occurs at Asn-316. Active-site residues include Asp-348 and His-382. Positions 461 to 488 are disordered; it reads SKSGSSLKSHSHSQTHKHRKDVSTISNA. Residues 469-480 show a composition bias toward basic residues; that stretch reads SHSHSQTHKHRK.

It belongs to the AB hydrolase superfamily. Lipase family. Class Lip subfamily.

It is found in the secreted. The catalysed reaction is a triacylglycerol + H2O = a diacylglycerol + a fatty acid + H(+). The enzyme catalyses a monoacylglycerol + H2O = glycerol + a fatty acid + H(+). It carries out the reaction a diacylglycerol + H2O = a monoacylglycerol + a fatty acid + H(+). Inhibited by different metal ions including Fe(2+), Fe(3+), Cu(2+), and Zn(2+). The monovalent ions Na(+) and K(+) exhibit less dramatic inhibition. Functionally, secreted lipase that releases free fatty acids from monoacylglycerol and triacylglycerol but has no phospholipase or lysophospholipase activities. Has minor esterase activity. Due to an absence of fatty acid synthase genes in Malassezia species, secretory lipases are essential for the yeast to generate free fatty acids from degradation of sebum and assimilate them as lipid sources for growth. Plays important roles not only in lipid metabolism but also in the immune response of host cells and pathogenesis. Hydrolyzes lipids, such as Tween 20, 40 and 80, with Tween 80 being the best substrate. This is Secreted triacylglycerol lipase LIP1 from Malassezia furfur (Pityriasis versicolor infection agent).